The chain runs to 201 residues: Small ribosomal subunit protein uS4 (201 aa).

Residues 21–43 (GTGKELNRRPYAPGDHGQGRRQK) form a disordered region. The 61-residue stretch at 93–153 (RRLDNMVYRL…EKSKDMAIIK (61 aa)) folds into the S4 RNA-binding domain.

Belongs to the universal ribosomal protein uS4 family. As to quaternary structure, part of the 30S ribosomal subunit. Contacts protein S5. The interaction surface between S4 and S5 is involved in control of translational fidelity.

In terms of biological role, one of the primary rRNA binding proteins, it binds directly to 16S rRNA where it nucleates assembly of the body of the 30S subunit. Functionally, with S5 and S12 plays an important role in translational accuracy. The sequence is that of Small ribosomal subunit protein uS4 from Levilactobacillus brevis (strain ATCC 367 / BCRC 12310 / CIP 105137 / JCM 1170 / LMG 11437 / NCIMB 947 / NCTC 947) (Lactobacillus brevis).